We begin with the raw amino-acid sequence, 275 residues long: Phenylalanine-4-hydroxylase (275 aa).

The Fe cation site is built by histidine 135, histidine 140, and glutamate 181.

It belongs to the biopterin-dependent aromatic amino acid hydroxylase family. It depends on Fe(2+) as a cofactor.

The enzyme catalyses (6R)-L-erythro-5,6,7,8-tetrahydrobiopterin + L-phenylalanine + O2 = (4aS,6R)-4a-hydroxy-L-erythro-5,6,7,8-tetrahydrobiopterin + L-tyrosine. The protein operates within amino-acid degradation; L-phenylalanine degradation; acetoacetate and fumarate from L-phenylalanine: step 1/6. This is Phenylalanine-4-hydroxylase (phhA) from Mesorhizobium japonicum (strain LMG 29417 / CECT 9101 / MAFF 303099) (Mesorhizobium loti (strain MAFF 303099)).